A 447-amino-acid chain; its full sequence is Bifunctional protein GlmU (447 aa).

Residues 1–225 form a pyrophosphorylase region; the sequence is MLTVAILAAG…NGELQGINNR (225 aa). UDP-N-acetyl-alpha-D-glucosamine is bound by residues 7–10, lysine 21, glutamine 73, and 78–79; these read LAAG and GT. Aspartate 103 serves as a coordination point for Mg(2+). UDP-N-acetyl-alpha-D-glucosamine contacts are provided by glycine 140, glutamate 154, asparagine 169, and asparagine 223. Asparagine 223 contributes to the Mg(2+) binding site. Residues 226–246 form a linker region; the sequence is VQLSKCEETIQNLIKEKHMLG. Positions 247–447 are N-acetyltransferase; it reads GVTFINPASC…QVNIENWKKN (201 aa). UDP-N-acetyl-alpha-D-glucosamine contacts are provided by arginine 328 and lysine 346. The active-site Proton acceptor is the histidine 358. UDP-N-acetyl-alpha-D-glucosamine-binding residues include tyrosine 361 and asparagine 372. Acetyl-CoA contacts are provided by alanine 375, alanine 418, and arginine 435.

It in the N-terminal section; belongs to the N-acetylglucosamine-1-phosphate uridyltransferase family. The protein in the C-terminal section; belongs to the transferase hexapeptide repeat family. As to quaternary structure, homotrimer. The cofactor is Mg(2+).

It localises to the cytoplasm. The enzyme catalyses alpha-D-glucosamine 1-phosphate + acetyl-CoA = N-acetyl-alpha-D-glucosamine 1-phosphate + CoA + H(+). It catalyses the reaction N-acetyl-alpha-D-glucosamine 1-phosphate + UTP + H(+) = UDP-N-acetyl-alpha-D-glucosamine + diphosphate. It functions in the pathway nucleotide-sugar biosynthesis; UDP-N-acetyl-alpha-D-glucosamine biosynthesis; N-acetyl-alpha-D-glucosamine 1-phosphate from alpha-D-glucosamine 6-phosphate (route II): step 2/2. It participates in nucleotide-sugar biosynthesis; UDP-N-acetyl-alpha-D-glucosamine biosynthesis; UDP-N-acetyl-alpha-D-glucosamine from N-acetyl-alpha-D-glucosamine 1-phosphate: step 1/1. The protein operates within bacterial outer membrane biogenesis; LPS lipid A biosynthesis. Catalyzes the last two sequential reactions in the de novo biosynthetic pathway for UDP-N-acetylglucosamine (UDP-GlcNAc). The C-terminal domain catalyzes the transfer of acetyl group from acetyl coenzyme A to glucosamine-1-phosphate (GlcN-1-P) to produce N-acetylglucosamine-1-phosphate (GlcNAc-1-P), which is converted into UDP-GlcNAc by the transfer of uridine 5-monophosphate (from uridine 5-triphosphate), a reaction catalyzed by the N-terminal domain. The sequence is that of Bifunctional protein GlmU from Prochlorococcus marinus (strain MIT 9515).